The chain runs to 194 residues: Protein DROOPING LEAF (194 aa).

Residues 15–42 (CTYCNTVLAVGVPCKRLMDTVTVKCGHC) form a C4-type zinc finger. A disordered region spans residues 83–103 (LVSPTSNEGSPRAPFVVKPPE).

This sequence belongs to the YABBY family.

It is found in the nucleus. Regulates carpel specification in flower development. Severe or intermediate mutation in DL causes complete or partial homeotic conversion of carpels into stamens without affecting the identities of other floral organs. Interacts antagonistically with class B genes and controls floral meristem determinacy. Regulates midrib formation in leaves probably by inducing cell proliferation in the central region of the leaf. This chain is Protein DROOPING LEAF (DL), found in Oryza sativa subsp. japonica (Rice).